A 1151-amino-acid polypeptide reads, in one-letter code: Ankyrin and IPT/TIG repeat-containing protein C26H5.05 (1151 aa).

3 disordered regions span residues 77–104 (NLPS…AECL), 452–511 (KSRN…ENSR), and 516–535 (QLSA…KSVE). The span at 87–98 (SHASSPNLSNSQ) shows a compositional bias: polar residues. A compositionally biased stretch (basic and acidic residues) spans 452–463 (KSRNLTKSEKTG). 2 stretches are compositionally biased toward polar residues: residues 464–496 (KSNS…SDNP) and 517–532 (LSAS…STLK). Residues 658-739 (PLISRIIPNK…SSEAPVMFTY (82 aa)) enclose the IPT/TIG domain. ANK repeat units follow at residues 861 to 890 (SGRS…DVNK) and 894 to 923 (LGYT…KPDV). The interval 1041–1067 (PPPYSEFADDTTAQAGSSKRDSAISED) is disordered. Basic and acidic residues predominate over residues 1058–1067 (SKRDSAISED). Residues 1113–1133 (MDFMLFSFWLPALLLLSIFGL) traverse the membrane as a helical segment.

Its subcellular location is the vacuole membrane. The sequence is that of Ankyrin and IPT/TIG repeat-containing protein C26H5.05 from Schizosaccharomyces pombe (strain 972 / ATCC 24843) (Fission yeast).